Reading from the N-terminus, the 492-residue chain is Glycerol kinase 1 (492 aa).

T10 provides a ligand contact to ADP. 2 residues coordinate ATP: T10 and S11. Residue T10 coordinates sn-glycerol 3-phosphate. K14 provides a ligand contact to ADP. Sn-glycerol 3-phosphate contacts are provided by R80, E81, Y132, and D241. Positions 80, 81, 132, and 241 each coordinate glycerol. Residues T263, G306, G407, and N411 each contribute to the ADP site. The ATP site is built by T263, G306, and G407.

Belongs to the FGGY kinase family.

It carries out the reaction glycerol + ATP = sn-glycerol 3-phosphate + ADP + H(+). Its pathway is polyol metabolism; glycerol degradation via glycerol kinase pathway; sn-glycerol 3-phosphate from glycerol: step 1/1. Inhibited by fructose 1,6-bisphosphate (FBP). Key enzyme in the regulation of glycerol uptake and metabolism. Catalyzes the phosphorylation of glycerol to yield sn-glycerol 3-phosphate. The chain is Glycerol kinase 1 from Thermotoga maritima (strain ATCC 43589 / DSM 3109 / JCM 10099 / NBRC 100826 / MSB8).